We begin with the raw amino-acid sequence, 867 residues long: Putative ubiquitin thioesterase L96 (867 aa).

4 disordered regions span residues 49 to 73 (VNQYSTNPPSSSSESDDDEDMGKQD), 177 to 204 (IKSVSPSRSPSPRRSRSPSPNIQNMKKK), 231 to 271 (YILS…PKYR), and 379 to 591 (LSTQ…YKGG). Composition is skewed to basic residues over residues 234-258 (SRKKSPSPVRKSRSPSLRQRSRSPG) and 421-430 (KITRKPKSPR). 2 stretches are compositionally biased toward low complexity: residues 433–462 (PPASVRRSRTPSVPKSPSARPRSKSPSVRA) and 472–551 (PPSS…KSPS). Polar residues predominate over residues 565–575 (ITVDPSVTPPS). Basic and acidic residues predominate over residues 582-591 (RPELPEYKGG). In terms of domain architecture, OTU spans 606–745 (YKVIPVKGDG…DYHYTALTPL (140 aa)). Residue aspartate 614 is part of the active site. Cysteine 617 serves as the catalytic Nucleophile. Histidine 738 is a catalytic residue.

The enzyme catalyses Thiol-dependent hydrolysis of ester, thioester, amide, peptide and isopeptide bonds formed by the C-terminal Gly of ubiquitin (a 76-residue protein attached to proteins as an intracellular targeting signal).. Its function is as follows. Hydrolase that can remove conjugated ubiquitin from proteins and may therefore play an important regulatory role at the level of protein turnover by preventing degradation. May be involved in TIV genomic DNA packaging in a manner related to the Gag polyproteins of the mammalian viruses. The polypeptide is Putative ubiquitin thioesterase L96 (Tipula iridescent virus (TIV)).